Consider the following 365-residue polypeptide: Peptide chain release factor 2 (365 aa).

N5-methylglutamine is present on Q252.

The protein belongs to the prokaryotic/mitochondrial release factor family. Methylated by PrmC. Methylation increases the termination efficiency of RF2.

The protein resides in the cytoplasm. In terms of biological role, peptide chain release factor 2 directs the termination of translation in response to the peptide chain termination codons UGA and UAA. This Pseudoalteromonas translucida (strain TAC 125) protein is Peptide chain release factor 2.